The sequence spans 610 residues: Sulfite reductase [NADPH] flavoprotein alpha-component (610 aa).

The Flavodoxin-like domain occupies 68-206 (IIVISASQTG…EVDKWKEKVV (139 aa)). Residues 74-79 (SQTGNA), 121-124 (STHG), and 157-166 (LGDRSYEYFA) each bind FMN. Positions 243–459 (EFPLIAYLLN…VESNDNFRLP (217 aa)) constitute an FAD-binding FR-type domain. FAD is bound by residues T331, S365, 397-400 (RFYS), 415-417 (TVS), Y421, and 430-433 (GGAS). Residues 530–531 (SR), 536–540 (KVYVQ), and D572 each bind NADP(+). Residue Y610 participates in FAD binding.

This sequence belongs to the NADPH-dependent sulphite reductase flavoprotein subunit CysJ family. In the N-terminal section; belongs to the flavodoxin family. The protein in the C-terminal section; belongs to the flavoprotein pyridine nucleotide cytochrome reductase family. In terms of assembly, alpha(8)-beta(8). The alpha component is a flavoprotein, the beta component is a hemoprotein. The cofactor is FAD. FMN is required as a cofactor.

The catalysed reaction is hydrogen sulfide + 3 NADP(+) + 3 H2O = sulfite + 3 NADPH + 4 H(+). It functions in the pathway sulfur metabolism; hydrogen sulfide biosynthesis; hydrogen sulfide from sulfite (NADPH route): step 1/1. Functionally, component of the sulfite reductase complex that catalyzes the 6-electron reduction of sulfite to sulfide. This is one of several activities required for the biosynthesis of L-cysteine from sulfate. The flavoprotein component catalyzes the electron flow from NADPH -&gt; FAD -&gt; FMN to the hemoprotein component. This chain is Sulfite reductase [NADPH] flavoprotein alpha-component, found in Blochmanniella floridana.